Consider the following 456-residue polypeptide: CBL-interacting protein kinase 9 (456 aa).

The 256-residue stretch at 27 to 282 (YELGKTIGEG…IAQILEDDWF (256 aa)) folds into the Protein kinase domain. Residues 33–41 (IGEGSFAKV) and K56 contribute to the ATP site. The active-site Proton acceptor is D150. The activation loop stretch occupies residues 168–197 (DFGLSAFAPQTKEDGLLHTACGTPNYVAPE). Residues 318 to 343 (REKPESMNAFALISRSQGFNLGNLFE) form the NAF domain. The tract at residues 351–380 (KRETSFTSQCTPQEIMSKIEEACGPLGFNV) is PPI.

This sequence belongs to the protein kinase superfamily. CAMK Ser/Thr protein kinase family. SNF1 subfamily. Mn(2+) serves as cofactor.

The enzyme catalyses L-seryl-[protein] + ATP = O-phospho-L-seryl-[protein] + ADP + H(+). It carries out the reaction L-threonyl-[protein] + ATP = O-phospho-L-threonyl-[protein] + ADP + H(+). Functionally, CIPK serine-threonine protein kinases interact with CBL proteins. Binding of a CBL protein to the regulatory NAF domain of CIPK protein lead to the activation of the kinase in a calcium-dependent manner. The sequence is that of CBL-interacting protein kinase 9 (CIPK9) from Oryza sativa subsp. japonica (Rice).